We begin with the raw amino-acid sequence, 108 residues long: Thaicobrin (108 aa).

The B30.2/SPRY domain maps to 1-108 (SPPGNWQKAD…IWQKGLWWLG (108 aa)).

It belongs to the ohanin/vespryn family. In terms of tissue distribution, expressed by the venom gland.

The protein localises to the secreted. Its function is as follows. Neurotoxin that produces dose-dependent hypolocomotion and hyperalgesia in mice. May directly act on the central nervous system, as it is 6500-fold more potent when administered intracerebroventricularly than intraperitoneal. This is Thaicobrin from Naja kaouthia (Monocled cobra).